A 100-amino-acid polypeptide reads, in one-letter code: NADH-quinone oxidoreductase subunit K (100 aa).

3 helical membrane-spanning segments follow: residues 2–22 (IGLT…LVGI), 29–49 (IMLF…LAAI), and 60–80 (IIAF…LGLL).

This sequence belongs to the complex I subunit 4L family. NDH-1 is composed of 14 different subunits. Subunits NuoA, H, J, K, L, M, N constitute the membrane sector of the complex.

It is found in the cell inner membrane. It catalyses the reaction a quinone + NADH + 5 H(+)(in) = a quinol + NAD(+) + 4 H(+)(out). NDH-1 shuttles electrons from NADH, via FMN and iron-sulfur (Fe-S) centers, to quinones in the respiratory chain. The immediate electron acceptor for the enzyme in this species is believed to be ubiquinone. Couples the redox reaction to proton translocation (for every two electrons transferred, four hydrogen ions are translocated across the cytoplasmic membrane), and thus conserves the redox energy in a proton gradient. The protein is NADH-quinone oxidoreductase subunit K of Campylobacter concisus (strain 13826).